We begin with the raw amino-acid sequence, 878 residues long: MTKFTTEEVRSKFITYFKANNHTHVPASSLIPHNDPSLMFVNSGMVQFKNVFTGQGKRPYNKAVTSQKSLRAGGKHNDLENVGYTARHHTFFEMLGNFSFGDYFKEQAIYYAWNLLTKEFELPKDKLYATIYHTDDEAAAYWKKIAGFGDDRIIKIKTNDNFWSMGDTGPCGPCSEIFYDHGEQIYGGLPGTKDEDGDRFIEIWNMVFMQYEQIDKDTSIELSQKSIDTGMGLERMTAVLQHVNNNYDIDLFQEIINFTENIVKVKVEGEAKFSYRVIADHLRASSFLIADGVIPSNEGRGYVLRRIMRRSMRHAHMLGSKEPLMYKLLPKLVDLMGNVYPELKRAESFISSILEQEEIRFKATLERGLKLLTEETETLTKGNELSGEVAFKLYDTYGFPLDLTEDILKNRDIAVDHKGFEEQMLMQKARARKSWLGSGESKTDQLWFDIKEQHGSTEFLGYTLNEAKCKIIALIKNNNLVNDIKEIDTQFLLISNQTPFYGESGGQIGDIGTIFAKDSEVEVIDTLKYLGSIIIHKCILKKGQINVGENANFSIDIRYRQNLRIHHSATHILHAVLHEVLGKHVTQKGSLVAPTYLRFDISHSKAVTNEEITLIEDKVNEIIRDNHEVTTTLMATEDAIKQGAMALFGEKYDSEVRVVKMGETSLELCGGTHVRRTGDIGCFKITSESAIAAGVRRIEAVCGEFVITLMREKDSLLKSIESSFKTNKNELITKVNNILERNKEVEKELEKTLLASLDLSIEQIEKQSAQITGIKLLYKKVGNIDNKILRQAAENLTKKVEDLIMVYIAEGIGKLSITVAVSKAITDKYNADIIAKKLSLFLGGSGGGGQASLAQAGGNDIGKLTNIHEKLYSLLTVS.

The Zn(2+) site is built by histidine 567, histidine 571, cysteine 669, and histidine 673.

Belongs to the class-II aminoacyl-tRNA synthetase family. Requires Zn(2+) as cofactor.

The protein resides in the cytoplasm. It carries out the reaction tRNA(Ala) + L-alanine + ATP = L-alanyl-tRNA(Ala) + AMP + diphosphate. Its function is as follows. Catalyzes the attachment of alanine to tRNA(Ala) in a two-step reaction: alanine is first activated by ATP to form Ala-AMP and then transferred to the acceptor end of tRNA(Ala). Also edits incorrectly charged Ser-tRNA(Ala) and Gly-tRNA(Ala) via its editing domain. The protein is Alanine--tRNA ligase of Rickettsia conorii (strain ATCC VR-613 / Malish 7).